The following is a 144-amino-acid chain: Cytochrome c3 (144 aa).

The first 24 residues, methionine 1 to alanine 24, serve as a signal peptide directing secretion. The heme c site is built by histidine 51, histidine 54, cysteine 59, cysteine 62, histidine 63, histidine 64, cysteine 76, cysteine 81, histidine 82, histidine 100, cysteine 108, cysteine 111, histidine 112, cysteine 125, cysteine 128, and histidine 129.

The protein belongs to the cytochrome c family. In terms of assembly, homodimer. Heterotrimer of cytochrome c3 FDH2C and formate dehydrogenase FDH2 alpha and beta subunits that forms the FdhABC(3) complex. Post-translationally, binds 4 heme c groups per subunit.

The protein localises to the periplasm. Functionally, participates in sulfate respiration coupled with phosphorylation by transferring electrons from the enzyme dehydrogenase to ferredoxin. Gamma chain of the formate dehydrogenase (FDH) that catalyzes the reversible two-electron oxidation of formate to carbon dioxide. The gamma subunit of formate dehydrogenase forms a c-type heme. This chain is Cytochrome c3, found in Nitratidesulfovibrio vulgaris (strain ATCC 29579 / DSM 644 / CCUG 34227 / NCIMB 8303 / VKM B-1760 / Hildenborough) (Desulfovibrio vulgaris).